The chain runs to 732 residues: uncharacterized protein (732 aa).

Residues 145-207 form a disordered region; that stretch reads ETLRDSVINP…RRRPEMASPH (63 aa). Residues 170–179 are compositionally biased toward basic and acidic residues; that stretch reads KGHETLERGS. Residues 176 to 524 enclose the Reverse transcriptase domain; sequence ERGSKALGPE…KKIPFLGYLI (349 aa).

Its subcellular location is the mitochondrion. This is an uncharacterized protein from Marchantia polymorpha (Common liverwort).